Reading from the N-terminus, the 252-residue chain is tRNA (guanine-N(1)-)-methyltransferase (252 aa).

Residues glycine 113 and 133–138 (IGDYVL) each bind S-adenosyl-L-methionine. Positions 229–238 (VARPAANAPA) are enriched in low complexity. Residues 229-252 (VARPAANAPAKGESQKTPKNKTDG) form a disordered region. Over residues 241-252 (ESQKTPKNKTDG) the composition is skewed to basic and acidic residues.

It belongs to the RNA methyltransferase TrmD family. As to quaternary structure, homodimer.

It localises to the cytoplasm. The catalysed reaction is guanosine(37) in tRNA + S-adenosyl-L-methionine = N(1)-methylguanosine(37) in tRNA + S-adenosyl-L-homocysteine + H(+). Its function is as follows. Specifically methylates guanosine-37 in various tRNAs. The protein is tRNA (guanine-N(1)-)-methyltransferase of Rhodopseudomonas palustris (strain HaA2).